The following is an 821-amino-acid chain: V-type proton ATPase subunit a3 (821 aa).

The residue at position 2 (alanine 2) is an N-acetylalanine. The Cytoplasmic portion of the chain corresponds to 2–421 (AESGGGGGCC…ANPGVFTIVT (420 aa)). A coiled-coil region spans residues 97 to 144 (KENDIDLDDVEVKLGELEAELVEINANNDKLQRSYNELMEYKLVLQKA). Serine 174 carries the post-translational modification Phosphoserine. Residues 422–442 (FPFLFAVMFGDWGHGICILLA) traverse the membrane as a helical segment. Residues 443-469 (TMYLILKEKKLASQKLGDIMEMAFGGR) are Vacuolar-facing. Residues 470 to 490 (YVILMMSLFSIYTGLIYNEFF) form a helical membrane-spanning segment. The Cytoplasmic segment spans residues 491 to 548 (SIPFPLFAPSAYDCRDVSCSEATTIGLIKVRDTYPFGLDPVWHGSRSELPFLNSLKMK). A helical transmembrane segment spans residues 549–569 (MSILLGVSQMNLGIIMSYFNA). The Vacuolar portion of the chain corresponds to 570–581 (RFFKSSVNIWFQ). Residues 582–602 (FIPQMIFLNSLFGYLSVLIII) traverse the membrane as a helical segment. Over 603 to 640 (KWCTGSQADLYHVMIYMFLSPMDELGENQLFPHQKTLQ) the chain is Cytoplasmic. The chain crosses the membrane as a helical span at residues 641–661 (LVLLFLALVSVPCMLLPKPFI). Over 662–758 (LKKQHEARHQ…LLLAWGYNNP (97 aa)) the chain is Vacuolar. Residues 759 to 779 (LILIVGVLVFIFATVGVLLVM) traverse the membrane as a helical segment. Over 780 to 821 (ETLSAFLHALRLHWVEFQNKFYEGDGYKFAPFTFIFTANEDE) the chain is Cytoplasmic.

The protein belongs to the V-ATPase 116 kDa subunit family. In terms of assembly, V-ATPase is a heteromultimeric enzyme composed of a peripheral catalytic V1 complex (components A to H) attached to an integral membrane V0 proton pore complex (components: a, c, c'', d and e). In terms of tissue distribution, expressed in etiolated seedlings hypocotyls.

It localises to the vacuole membrane. Functionally, essential component of the vacuolar proton pump (V-ATPase), a multimeric enzyme that catalyzes the translocation of protons across the membranes. Required for assembly and activity of the V-ATPase. Involved in vacuolar nutrient storage (e.g. accumulation and storage of nitrate) and in tolerance to some toxic ions (e.g. zinc ions sequestration in vacuoles). This is V-type proton ATPase subunit a3 (VHA-a3) from Arabidopsis thaliana (Mouse-ear cress).